The chain runs to 340 residues: GTPase Obg (340 aa).

An Obg domain is found at 1 to 161 (MKFVDMTNIT…QHLLLELLLI (161 aa)). The 174-residue stretch at 162–335 (ANVGIFGLPN…LCNSIMKFIM (174 aa)) folds into the OBG-type G domain. GTP contacts are provided by residues 168–175 (GLPNSGKS), 193–197 (FTTLV), 215–218 (DIPG), 285–288 (NKID), and 316–318 (SSI). Mg(2+)-binding residues include serine 175 and threonine 195.

The protein belongs to the TRAFAC class OBG-HflX-like GTPase superfamily. OBG GTPase family. In terms of assembly, monomer. It depends on Mg(2+) as a cofactor.

It is found in the cytoplasm. An essential GTPase which binds GTP, GDP and possibly (p)ppGpp with moderate affinity, with high nucleotide exchange rates and a fairly low GTP hydrolysis rate. Plays a role in control of the cell cycle, stress response, ribosome biogenesis and in those bacteria that undergo differentiation, in morphogenesis control. This chain is GTPase Obg, found in Blochmanniella pennsylvanica (strain BPEN).